The primary structure comprises 356 residues: Protein MGF 360-3L (356 aa).

The stretch at 61–93 is one ANK repeat; it reads KLNTALVLAVKENNEDLIMLFTEWGANINYGLL.

The protein belongs to the asfivirus MGF 360 family.

Its function is as follows. Plays a role in virus cell tropism, and may be required for efficient virus replication in macrophages. This African swine fever virus (strain Badajoz 1971 Vero-adapted) (Ba71V) protein is Protein MGF 360-3L.